Reading from the N-terminus, the 371-residue chain is MMQLSRGQRRWLAAIAVLLIGGFFIARHLMAPVPVNYQTVKVVHRDLQQNVLATGKLDAVRKVDVGAQVSGQLEKLYVEIGDHVKRGQLLAMIDPQQAQNQIKEVEATLQDLNAQRIQAKAELHLATVTLGRQQNLAKLQVVSRQDLDQAVTDLAVKNAKVGTIDAQINKAKASLDTAKINLDYTQISAPMDGDVVQITTLQGQTVIAAQQAPNILTLADMSTMLVQAQVSEADVINLKPGMKASFTVLGDPGKRFSGVLKDILPTPEKVNDAIFYSARFEVPNPDRLLRLQMTAQVSIQLANVDQAVVIPLAALGDELGSNRYQVTVLKEGKEEKREVTIGIRNNVDAQVISGLSVGEDVIVSRGGTGDA.

Topologically, residues 1 to 10 (MMQLSRGQRR) are cytoplasmic. A helical membrane pass occupies residues 11 to 31 (WLAAIAVLLIGGFFIARHLMA). Topologically, residues 32–371 (PVPVNYQTVK…IVSRGGTGDA (340 aa)) are periplasmic. A coiled-coil region spans residues 94 to 127 (DPQQAQNQIKEVEATLQDLNAQRIQAKAELHLAT).

It belongs to the membrane fusion protein (MFP) (TC 8.A.1) family. In terms of assembly, homohexamer. Part of the tripartite efflux system MacAB-TolC, which is composed of an inner membrane transporter, MacB, a periplasmic membrane fusion protein, MacA, and an outer membrane component, TolC. The complex forms a large protein conduit and can translocate molecules across both the inner and outer membranes. MacA interacts with MacB and TolC.

Its subcellular location is the cell inner membrane. Its function is as follows. Part of the tripartite efflux system MacAB-TolC. MacA stimulates the ATPase activity of MacB by promoting the closed ATP-bound state of MacB, increases the capacity of MacB to bind macrolides such as erythromycin, and provides a physical link between MacB and TolC. Confers resistance against macrolides. This is Macrolide export protein MacA (macA) from Yersinia pestis.